The following is an 833-amino-acid chain: Leucine--tRNA ligase (833 aa).

Residues 41–52 (PYPSGAGLHVGH) carry the 'HIGH' region motif. The short motif at 610 to 614 (KMSKS) is the 'KMSKS' region element. An ATP-binding site is contributed by Lys613.

The protein belongs to the class-I aminoacyl-tRNA synthetase family.

The protein localises to the cytoplasm. It carries out the reaction tRNA(Leu) + L-leucine + ATP = L-leucyl-tRNA(Leu) + AMP + diphosphate. In Streptococcus pyogenes serotype M6 (strain ATCC BAA-946 / MGAS10394), this protein is Leucine--tRNA ligase.